The following is an 822-amino-acid chain: Collagen alpha chain CG42342 (822 aa).

Disordered regions lie at residues Met-1 to Pro-45 and Arg-66 to Pro-99. Residues Met-1–Arg-104 lie on the Cytoplasmic side of the membrane. Residues Ser-11 to Ser-25 are compositionally biased toward polar residues. Residues Ile-76–Ser-94 show a composition bias toward low complexity. The chain crosses the membrane as a helical; Signal-anchor for type II membrane protein span at residues Phe-105–Leu-125. Residues Tyr-126–Glu-822 lie on the Extracellular side of the membrane. A coiled-coil region spans residues Gln-131–His-162. Disordered regions lie at residues Gln-169–Gln-188, Val-205–Gly-297, and Leu-345–Glu-822. The stretch at Val-194 to Ala-222 forms a coiled coil. Collagen-like domains are found at residues Gln-241–Asp-299, Gly-350–Arg-409, Gly-430–Gly-469, Arg-493–Leu-526, Gly-527–Lys-586, Gly-621–Ala-680, and Gly-681–Gln-740. Residues Pro-242–Pro-251 are compositionally biased toward pro residues. The span at Pro-284–Val-293 shows a compositional bias: basic and acidic residues. Positions Glu-360–Thr-402 are enriched in low complexity. Positions Lys-403–Arg-412 are enriched in basic and acidic residues. A compositionally biased stretch (pro residues) spans Pro-431–Glu-443. Positions Lys-504–Pro-517 are enriched in basic and acidic residues. A compositionally biased stretch (low complexity) spans Glu-522–Ile-540. Residues Leu-567 to Tyr-579 are compositionally biased toward pro residues. Over residues Lys-583 to Asp-602 the composition is skewed to basic and acidic residues. Residues Pro-619–Pro-628 show a composition bias toward pro residues. Over residues Arg-638 to Asp-655 the composition is skewed to basic and acidic residues. Residues Pro-658–Arg-668 are compositionally biased toward low complexity. Residues Thr-790–Glu-822 are a coiled coil. Residues Tyr-793–Gln-815 show a composition bias toward acidic residues.

It localises to the cell membrane. This chain is Collagen alpha chain CG42342, found in Drosophila melanogaster (Fruit fly).